Here is a 383-residue protein sequence, read N- to C-terminus: Cytochrome b (383 aa).

4 consecutive transmembrane segments (helical) span residues 32–52 (FGSL…FLAM), 76–98 (WLIR…CHIA), 113–133 (TWSI…LGYV), and 179–199 (FFSL…AHMI). The heme b site is built by His82 and His96. Heme b-binding residues include His183 and His197. His202 lines the a ubiquinone pocket. The next 4 helical transmembrane spans lie at 225–245 (FIFK…IFVC), 289–309 (LLGV…PLTD), 321–341 (LMKL…WIGA), and 348–368 (YLEV…FIVP).

This sequence belongs to the cytochrome b family. Fungal cytochrome b-c1 complex contains 10 subunits; 3 respiratory subunits, 2 core proteins and 5 low-molecular weight proteins. Cytochrome b-c1 complex is a homodimer. The cofactor is heme b.

It is found in the mitochondrion inner membrane. Component of the ubiquinol-cytochrome c reductase complex (complex III or cytochrome b-c1 complex) that is part of the mitochondrial respiratory chain. The b-c1 complex mediates electron transfer from ubiquinol to cytochrome c. Contributes to the generation of a proton gradient across the mitochondrial membrane that is then used for ATP synthesis. This Schizophyllum commune (Split gill fungus) protein is Cytochrome b (cob).